Reading from the N-terminus, the 290-residue chain is Short chain dehydrogenase/reductase nsrO (290 aa).

Positions 37 and 149 each coordinate NADP(+). Catalysis depends on proton donor residues Ser168 and Tyr182. The NADP(+) site is built by Tyr182, Lys186, and Thr221. Residue Lys186 is the Lowers pKa of active site Tyr of the active site.

This sequence belongs to the short-chain dehydrogenases/reductases (SDR) family.

It functions in the pathway secondary metabolite biosynthesis. Functionally, short chain dehydrogenase/reductase; part of the gene cluster that mediates the biosynthesis of the tetrahydroxanthone dimer neosartorin, which exhibits antibacterial activity. The two different monomeric units appear to be synthesized by the same set of enzymes, among which the Baeyer-Villiger monooxygenase nsrF is the key enzyme for the divergence of the biosynthetic routes. The pathway begins with the synthesis of atrochrysone thioester by the polyketide synthase nsrB. The atrochrysone carboxyl ACP thioesterase nsrC then breaks the thioester bond and releases the atrochrysone carboxylic acid from AacuL. Atrochrysone carboxylic acid is decarboxylated by the decarboxylase nsrE, and oxidized by the anthrone oxygenase nsrD to yield emodin. Emodin is then reduced to emodin hydroquinone by the oxidoreductase nsrR. A-ring reduction by the short chain dehydrogenase nsrJ, dehydration by the scytalone dehydratase-like protein nsrI and probable spontaneous re-oxidation, results in overall deoxygenation to chrysophanol. The Baeyer-Villiger monooxygenase nsrF accepts chrysophanol as a substrate to insert one oxygen atom at two different positions to yield the precursors of both monomric units. NsrF is promiscuous/flexible in interacting with the 2 (non methylated and methylated) aromatic rings of chrysophanol, thus diverging the biosynthetic pathway at this point. After the hydrolysis of the lactones, methylesterification by the methyltransferase nsrG yields respectively moniliphenone and 2,2',6'-trihydroxy-4-methyl-6-methoxya-cyldiphenylmethanone. The next steps are the hydroxylation by the FAD-dependent monooxygenase nsrK, followed by isomerization by the monooxygenase nsrQ. The short chain dehydrogenase/reductase nsrO then catalyzes the C-5 ketoreduction to give the xanthone skeleton of blennolide C and 5-acetylblennolide A. The acetyltransferase nsrL has a strict substrate specificity and uses only blennolide A but not blennolide C to yield 5-acetylblennolide A as the single-acetylated product. In the final step of the biosynthesis, the heterodimerization of the 2 xanthones, blennolide C and 5-acetylblennolide A, is catalyzed by the cytochrome P450 monooxygenase nsrP. NsrP can utilize at least three different xanthones as its substrates to perform the dimerization reaction. The chain is Short chain dehydrogenase/reductase nsrO from Aspergillus novofumigatus (strain IBT 16806).